The primary structure comprises 525 residues: MDVSYYDGPKDEVIEAMLKSAVTAMKLGQYEDGKGRLEDTMEFGTSNFQLLGTIYMYYGRVCRHLNHDAKALEFFEHELNMFKLIFNYPEACDSTRRIVQQALKMEKFSKARRFAEDLIDYTSNKKNGEKYIGQARILFASVCLEGCERDVESNQDEKKKLLSICAEQIAAVKLFNENNTEGAVSETKIMLIEAKCLSLDEKYEESRRKYQECIDFAIKTDQFEAVHIAYYDKALYAETYLLFFIIRDLRSALFYATKFGKERDVVKYKSKLSEEMLRNGEFHEAYLYGLEALVSIRKLGLNEHIGDVLLTIAKCLIALGKRRQAAYFIILGSVLTINQSSFKLFYEQIDVAMNQERSETATDQDACLAIDSSPDPTSSNDMINKFVVKLEHATNVETWEMIVNGIIEDQKKPVAIEKKENEEPVDMMDLIFSMSSRMDDQRTELSAARFIPPRPVSSASKKTTKSHRILPGLRANWTKVQSMKFDGHTMNRILKRSKKSKSSLDSTNSIQGDDTRSDDVTMTSK.

Residues 424-445 (PVDMMDLIFSMSSRMDDQRTEL) enclose the GoLoco domain. A disordered region spans residues 489 to 525 (TMNRILKRSKKSKSSLDSTNSIQGDDTRSDDVTMTSK).

In terms of assembly, interacts with gpr-1; gpr-1 forms a complex with lin-5 and GDP-bound goa-1.

Its subcellular location is the cytoplasm. The protein localises to the cell cortex. The protein resides in the cytoskeleton. It is found in the spindle. Functionally, in the 1-cell embryo, probably together with gpr-1, controls nuclear rotation and spindle elongation during mitosis. Complex of gpr-1 and gpr-2, in association with lin-5, activates G-protein signaling to affect mitotic spindle force. Polarity determinants (par genes) may regulate lin-5/gpr-1/gpr-2/goa-1 locally to create the asymmetric forces that drive spindle movement. In Caenorhabditis elegans, this protein is G-protein regulator 2 (gpr-2).